Reading from the N-terminus, the 636-residue chain is Probable potassium transport system protein Kup (636 aa).

Transmembrane regions (helical) follow at residues 22–42, 64–84, 115–135, 150–170, 182–202, 220–240, 261–281, 293–313, 351–371, 383–403, 408–428, and 433–453; these read VGLL…SPLY, ILSL…VMFI, LMVI…MITP, FDGI…ALFL, LFGP…VHGI, FFVV…LALT, WFIL…ALLL, LLAP…ATVI, IYIG…VIGF, VAVT…MLLL, PLLA…FFAA, and IVQG…LMST.

The protein belongs to the HAK/KUP transporter (TC 2.A.72) family.

The protein resides in the cell inner membrane. The catalysed reaction is K(+)(in) + H(+)(in) = K(+)(out) + H(+)(out). Functionally, transport of potassium into the cell. Likely operates as a K(+):H(+) symporter. The polypeptide is Probable potassium transport system protein Kup (Pseudomonas putida (strain ATCC 700007 / DSM 6899 / JCM 31910 / BCRC 17059 / LMG 24140 / F1)).